Reading from the N-terminus, the 95-residue chain is Large ribosomal subunit protein bL27 (95 aa).

Positions 1-24 (MAHKKGTGSTRNGRDSNSQRLGVK) are disordered. The span at 7-20 (TGSTRNGRDSNSQR) shows a compositional bias: polar residues.

The protein belongs to the bacterial ribosomal protein bL27 family.

The polypeptide is Large ribosomal subunit protein bL27 (Trichodesmium erythraeum (strain IMS101)).